Here is a 348-residue protein sequence, read N- to C-terminus: Nitrogenase vanadium-iron protein beta chain (348 aa).

The [8Fe-7S] cluster site is built by Cys-31, Cys-56, Cys-115, and Ser-153.

This sequence belongs to the NifD/NifK/NifE/NifN family. In terms of assembly, hexamer of two alpha, two beta, and two delta chains. It depends on [8Fe-7S] cluster as a cofactor.

The catalysed reaction is N2 + 8 reduced [2Fe-2S]-[ferredoxin] + 16 ATP + 16 H2O = H2 + 8 oxidized [2Fe-2S]-[ferredoxin] + 2 NH4(+) + 16 ADP + 16 phosphate + 6 H(+). This vanadium-iron protein is part of the nitrogenase complex that catalyzes the key enzymatic reactions in nitrogen fixation. This Azorhizophilus paspali (Azotobacter paspali) protein is Nitrogenase vanadium-iron protein beta chain (vnfK).